Reading from the N-terminus, the 714-residue chain is WD repeat and coiled-coil-containing protein (714 aa).

WD repeat units lie at residues 55–98 (GQFE…LEQN) and 154–194 (KGSG…LVPC). Disordered stretches follow at residues 432-454 (EEST…SENF) and 531-564 (QASR…KEKN). Residues 567 to 595 (QLTQNMERIFTRFAEVQQCLSEIREFTQN) are a coiled coil. Residues 685–714 (RSARRKSPARPPSGADDFPPESPKSPSMEK) form a disordered region.

This Danio rerio (Zebrafish) protein is WD repeat and coiled-coil-containing protein (wdcp).